A 779-amino-acid chain; its full sequence is Glucan endo-1,3-beta-D-glucosidase 2 (779 aa).

The interval 1–71 (MCYSRQAIPP…SNPLADSQVN (71 aa)) is disordered. Polar residues predominate over residues 57–71 (RTPSSSNPLADSQVN). Residues 73-309 (DNIFQSPVLS…NGLICQLSAD (237 aa)) are beta-sandwich subdomain. One can recognise a GH81 domain in the interval 73–779 (DNIFQSPVLS…WSLAYSGAFS (707 aa)). An alpha/beta subdomain region spans residues 309 to 400 (DSVPSIDMAA…LTNSFDMQVQ (92 aa)). The sufficient for catalytic activity stretch occupies residues 375–779 (IASSLDSTVK…WSLAYSGAFS (405 aa)). Residues 415-779 (NKKADYSQEK…WSLAYSGAFS (365 aa)) are (alpha/beta)6 barrel subdomain. Residue D526 is part of the active site. H530, D607, E609, and E613 together coordinate (1,3-beta-D-glucosyl)n. Catalysis depends on residues E609 and E613. Residues 678 to 680 (KID) are may provide specificity for triple-helical beta-glucan. Y691 provides a ligand contact to (1,3-beta-D-glucosyl)n.

Belongs to the glycosyl hydrolase 81 family.

It is found in the cytoplasm. It carries out the reaction Hydrolysis of (1-&gt;3)-beta-D-glucosidic linkages in (1-&gt;3)-beta-D-glucans.. Its activity is regulated as follows. Inhibited by mercury ions. Functionally, cleaves internal linkages in 1,3-beta-glucan. This is Glucan endo-1,3-beta-D-glucosidase 2 from Saccharomyces cerevisiae (strain ATCC 204508 / S288c) (Baker's yeast).